Reading from the N-terminus, the 543-residue chain is MGKGQPIEPNIEQSLVDLCKRTVAMNLLHCYPTTTEHELSCEEWGNGTERSQSMAACQGCVELRKEVHDLRTAVNLILPMLPLYPQLPNTFTTAANIAAQPALHQVLQQSLLRRKPTAHTPTVPQPECPGQLRTVLSSPGSALPNVMLMNHLMINGLKPVSPTLPNGHIQPAVGEASMQTDEQQVKWSSPSSVDSNGQKTDSSAASAGDNQNIDVIGDGSESPTSSNHSVQELAMLTSHQNLFNAFKDSQFIFNQVPKQEPVAPLRVAPATNGTTNGATKAAGPERKPRKPVNDDIVKIVRNQDLSEENIATFQIPVPKAHLSDPTFRPVSEQQIIQQIIQGKKYDEMEVGETMIQLCKKLAEKRVFGPRLMSQTTVAGLNHSNYSNLPIKGICYIQHVCRKVLYDKFENEEDFWDKFREAMRKLAARCRRVRHAKKTKHNREEAQAEMLSKRYGEDIPFNLNGSGLIIPKSEPSETPAVNGDINMITMGQIGTLLTQFNADRKTPLTEVLPAELLTTFLSYLNRPKQEVQSPPPAQNPQNPN.

Disordered regions lie at residues 165-228 (PNGH…SSNH) and 268-291 (APAT…PRKP). Polar residues predominate over residues 177–213 (SMQTDEQQVKWSSPSSVDSNGQKTDSSAASAGDNQNI). Low complexity predominate over residues 268–282 (APATNGTTNGATKAA).

In terms of processing, cleaved by caspase ced-3 in vitro.

The protein resides in the nucleus. Functionally, heterochronic protein which controls the choice of stage specific cell fates. Involved in the temporal progression of vulval fate patterning, possibly by inhibiting lin-12. Acts as a transcription factor involved in the stage-specific repression of insulin/insulin-like growth factor gene ins-33. The sequence is that of Protein lin-14 (lin-14) from Caenorhabditis briggsae.